The chain runs to 139 residues: Cell division protein SepF (139 aa).

It belongs to the SepF family. In terms of assembly, homodimer. Interacts with FtsZ.

The protein localises to the cytoplasm. Its function is as follows. Cell division protein that is part of the divisome complex and is recruited early to the Z-ring. Probably stimulates Z-ring formation, perhaps through the cross-linking of FtsZ protofilaments. Its function overlaps with FtsA. This chain is Cell division protein SepF, found in Coprothermobacter proteolyticus (strain ATCC 35245 / DSM 5265 / OCM 4 / BT).